A 346-amino-acid chain; its full sequence is Immunoglobulin heavy constant alpha (346 aa).

Ig-like domains lie at Pro6–Asp96, Pro118–Thr212, and Pro221–Asp323. Cys26 and Cys83 are joined by a disulfide. Asn134 carries an N-linked (GlcNAc...) (complex) asparagine glycan. Intrachain disulfides connect Cys139–Cys196 and Cys243–Cys306. Asn333 carries an N-linked (GlcNAc...) (complex) asparagine glycan.

Immunoglobulins are composed of two identical heavy chains and two identical light chains; disulfide-linked. Monomeric or polymeric. Part of the secretory IgA (sIgA) complex that consists of two, four or five IgA monomers, and two additional non-Ig polypeptides, namely the JCHAIN and the secretory component (the proteolytic product of PIGR). N-glycosylated. N-glycans attached to Asn-134 varies from differentially fucosylated complex and hybrid to sialylated with N-glycoyl neuraminic acid types: GlcNAc2Man3GlcNAc2(Fuc); GlcNAc1Man4GlcNAc2(Fuc); GlcNAc1Man4GlcNAc2; Gal1GlcNAc2Man3GlcNAc2(Fuc); GlcNAc2Man3GlcNAc2; Gal1GlcNAc2Man3GlcNAc2; GlcNAc1Man3GlcNAc2; GlcNAc1Man2GlcNAc2 and NeuGc1Gal1GlcNAc2Man3GlcNAc2(Fuc). N-glycans attached to Asn-333 are mainly fucosylated complex types: GlcNAc2Man3GlcNAc2; GlcNAc1Man3GlcNAc2; GlcNAc1Man3GlcNAc2(Fuc); GlcNAc2Man3GlcNAc2(Fuc); Gal1GlcNAc2Man3GlcNAc2(Fuc); NeuGc1Gal1GlcNAc1Man3GlcNAc2(Fuc); NeuGc1Gal1GlcNAc2Man3GlcNAc2(Fuc) and NeuAc1Gal1GlcNAc2Man3GlcNAc2(Fuc).

The protein resides in the secreted. Its subcellular location is the cell membrane. Constant region of immunoglobulin heavy chains. Immunoglobulins, also known as antibodies, are membrane-bound or secreted glycoproteins produced by B lymphocytes. In the recognition phase of humoral immunity, the membrane-bound immunoglobulins serve as receptors which, upon binding of a specific antigen, trigger the clonal expansion and differentiation of B lymphocytes into immunoglobulins-secreting plasma cells. Secreted immunoglobulins mediate the effector phase of humoral immunity, which results in the elimination of bound antigens. The antigen binding site is formed by the variable domain of one heavy chain, together with that of its associated light chain. Thus, each immunoglobulin has two antigen binding sites with remarkable affinity for a particular antigen. The variable domains are assembled by a process called V-(D)-J rearrangement and can then be subjected to somatic hypermutations which, after exposure to antigen and selection, allow affinity maturation for a particular antigen. Ig alpha is the major immunoglobulin class in body secretions. The polypeptide is Immunoglobulin heavy constant alpha (IGHA) (Equus asinus (Donkey)).